The chain runs to 381 residues: Homoserine O-succinyltransferase (381 aa).

The AB hydrolase-1 domain occupies 45 to 360 (NAVLVCHALN…PHGHDAFLLD (316 aa)). The active-site Nucleophile is Ser-151. Arg-221 is a binding site for substrate. Residues Asp-321 and His-354 contribute to the active site. A substrate-binding site is contributed by Asp-355.

Belongs to the AB hydrolase superfamily. MetX family. Homodimer.

The protein localises to the cytoplasm. It catalyses the reaction L-homoserine + succinyl-CoA = O-succinyl-L-homoserine + CoA. It functions in the pathway amino-acid biosynthesis; L-methionine biosynthesis via de novo pathway; O-succinyl-L-homoserine from L-homoserine: step 1/1. Transfers a succinyl group from succinyl-CoA to L-homoserine, forming succinyl-L-homoserine. The protein is Homoserine O-succinyltransferase of Paraburkholderia xenovorans (strain LB400).